The chain runs to 114 residues: UPF0757 protein YmgG (114 aa).

It belongs to the UPF0757 family.

This chain is UPF0757 protein YmgG, found in Shigella flexneri.